The sequence spans 283 residues: 4-hydroxy-3-methylbut-2-enyl diphosphate reductase (283 aa).

Residue Cys12 participates in [4Fe-4S] cluster binding. (2E)-4-hydroxy-3-methylbut-2-enyl diphosphate-binding residues include His40 and His72. Dimethylallyl diphosphate contacts are provided by His40 and His72. Residues His40 and His72 each coordinate isopentenyl diphosphate. Cys94 lines the [4Fe-4S] cluster pocket. Position 122 (His122) interacts with (2E)-4-hydroxy-3-methylbut-2-enyl diphosphate. A dimethylallyl diphosphate-binding site is contributed by His122. His122 contributes to the isopentenyl diphosphate binding site. Glu124 (proton donor) is an active-site residue. Thr160 contacts (2E)-4-hydroxy-3-methylbut-2-enyl diphosphate. Cys188 lines the [4Fe-4S] cluster pocket. Residues Ser216, Asn218, and Ser259 each contribute to the (2E)-4-hydroxy-3-methylbut-2-enyl diphosphate site. 3 residues coordinate dimethylallyl diphosphate: Ser216, Asn218, and Ser259. The isopentenyl diphosphate site is built by Ser216, Asn218, and Ser259.

It belongs to the IspH family. Requires [4Fe-4S] cluster as cofactor.

The catalysed reaction is isopentenyl diphosphate + 2 oxidized [2Fe-2S]-[ferredoxin] + H2O = (2E)-4-hydroxy-3-methylbut-2-enyl diphosphate + 2 reduced [2Fe-2S]-[ferredoxin] + 2 H(+). It catalyses the reaction dimethylallyl diphosphate + 2 oxidized [2Fe-2S]-[ferredoxin] + H2O = (2E)-4-hydroxy-3-methylbut-2-enyl diphosphate + 2 reduced [2Fe-2S]-[ferredoxin] + 2 H(+). It participates in isoprenoid biosynthesis; dimethylallyl diphosphate biosynthesis; dimethylallyl diphosphate from (2E)-4-hydroxy-3-methylbutenyl diphosphate: step 1/1. Its pathway is isoprenoid biosynthesis; isopentenyl diphosphate biosynthesis via DXP pathway; isopentenyl diphosphate from 1-deoxy-D-xylulose 5-phosphate: step 6/6. Its function is as follows. Catalyzes the conversion of 1-hydroxy-2-methyl-2-(E)-butenyl 4-diphosphate (HMBPP) into a mixture of isopentenyl diphosphate (IPP) and dimethylallyl diphosphate (DMAPP). Acts in the terminal step of the DOXP/MEP pathway for isoprenoid precursor biosynthesis. The protein is 4-hydroxy-3-methylbut-2-enyl diphosphate reductase of Dictyoglomus turgidum (strain DSM 6724 / Z-1310).